Reading from the N-terminus, the 143-residue chain is Nucleoside diphosphate kinase (143 aa).

Lysine 11, phenylalanine 59, arginine 87, threonine 93, arginine 104, and asparagine 114 together coordinate ATP. Histidine 117 acts as the Pros-phosphohistidine intermediate in catalysis.

It belongs to the NDK family. In terms of assembly, homotetramer. Requires Mg(2+) as cofactor.

It is found in the cytoplasm. The enzyme catalyses a 2'-deoxyribonucleoside 5'-diphosphate + ATP = a 2'-deoxyribonucleoside 5'-triphosphate + ADP. It carries out the reaction a ribonucleoside 5'-diphosphate + ATP = a ribonucleoside 5'-triphosphate + ADP. Functionally, major role in the synthesis of nucleoside triphosphates other than ATP. The ATP gamma phosphate is transferred to the NDP beta phosphate via a ping-pong mechanism, using a phosphorylated active-site intermediate. This is Nucleoside diphosphate kinase from Shewanella denitrificans (strain OS217 / ATCC BAA-1090 / DSM 15013).